The sequence spans 320 residues: ATP-dependent 6-phosphofructokinase (320 aa).

Gly12 lines the ATP pocket. 22-26 contributes to the ADP binding site; the sequence is RGVVR. Residues 73 to 74 and 103 to 106 each bind ATP; these read RF and GDGS. Position 104 (Asp104) interacts with Mg(2+). Substrate is bound at residue 126–128; the sequence is TID. Catalysis depends on Asp128, which acts as the Proton acceptor. Arg155 lines the ADP pocket. Substrate is bound by residues Arg163 and 170–172; that span reads MGR. Residues 186–188, Lys212, and 214–216 each bind ADP; these read GCE and KKH. Substrate is bound by residues Glu223, Arg244, and 250–253; that span reads HIQR.

Belongs to the phosphofructokinase type A (PFKA) family. ATP-dependent PFK group I subfamily. Prokaryotic clade 'B1' sub-subfamily. Homotetramer. Requires Mg(2+) as cofactor.

The protein resides in the cytoplasm. The enzyme catalyses beta-D-fructose 6-phosphate + ATP = beta-D-fructose 1,6-bisphosphate + ADP + H(+). Its pathway is carbohydrate degradation; glycolysis; D-glyceraldehyde 3-phosphate and glycerone phosphate from D-glucose: step 3/4. Allosterically activated by ADP and other diphosphonucleosides, and allosterically inhibited by phosphoenolpyruvate. Catalyzes the phosphorylation of D-fructose 6-phosphate to fructose 1,6-bisphosphate by ATP, the first committing step of glycolysis. In Aliivibrio fischeri (strain ATCC 700601 / ES114) (Vibrio fischeri), this protein is ATP-dependent 6-phosphofructokinase.